A 354-amino-acid polypeptide reads, in one-letter code: Trans-3-hydroxy-L-proline dehydratase (354 aa).

Cysteine 104 functions as the Proton acceptor in the catalytic mechanism. Substrate is bound by residues 105–106 (GH), aspartate 269, and 274–275 (GS).

This sequence belongs to the proline racemase family. In terms of assembly, homodimer. As to expression, ubiquitously expressed.

It carries out the reaction trans-3-hydroxy-L-proline = 1-pyrroline-2-carboxylate + H2O. Functionally, catalyzes the dehydration of trans-3-hydroxy-L-proline to Delta(1)-pyrroline-2-carboxylate (Pyr2C). May be required to degrade trans-3-hydroxy-L-proline from the diet and originating from the degradation of proteins such as collagen-IV that contain it. This is Trans-3-hydroxy-L-proline dehydratase (L3HYPDH) from Homo sapiens (Human).